A 281-amino-acid polypeptide reads, in one-letter code: Endonuclease III-like protein 1 (281 aa).

The N-terminal 17 residues, 1–17 (MCAAAPRGGGRAARRLG), are a transit peptide targeting the mitochondrion. Residues 1 to 60 (MCAAAPRGGGRAARRLGAATAGSRVPSAAPRYSRRTRRVPIAYEAEPKPESPGPKWEPEN) are disordered. Residues 15-24 (RLGAATAGSR) show a composition bias toward low complexity. Residues 168–192 (KYGGDIPGTVEELVKLPGVGPKMAH) form the HhH domain. Catalysis depends on K189, which acts as the Nucleophile; for N-glycosylase activity. Residues C259, C266, C269, and C275 each contribute to the [4Fe-4S] cluster site.

Belongs to the Nth/MutY family. [4Fe-4S] cluster serves as cofactor.

It localises to the nucleus. The protein localises to the mitochondrion. The enzyme catalyses 2'-deoxyribonucleotide-(2'-deoxyribose 5'-phosphate)-2'-deoxyribonucleotide-DNA = a 3'-end 2'-deoxyribonucleotide-(2,3-dehydro-2,3-deoxyribose 5'-phosphate)-DNA + a 5'-end 5'-phospho-2'-deoxyribonucleoside-DNA + H(+). In terms of biological role, bifunctional DNA N-glycosylase with associated apurinic/apyrimidinic (AP) lyase function that catalyzes the first step in base excision repair (BER), the primary repair pathway for the repair of oxidative DNA damage. The DNA N-glycosylase activity releases the damaged DNA base from DNA by cleaving the N-glycosidic bond, leaving an AP site. The AP lyase activity cleaves the phosphodiester bond 3' to the AP site by a beta-elimination. Primarily recognizes and repairs oxidative base damage of pyrimidines. This chain is Endonuclease III-like protein 1, found in Gallus gallus (Chicken).